Consider the following 305-residue polypeptide: Tyrosine recombinase XerC (305 aa).

In terms of domain architecture, Core-binding (CB) spans 1–94 (MSSVDEFLTY…ACRSYYAWLL (94 aa)). In terms of domain architecture, Tyr recombinase spans 115 to 292 (KLPQVLDADE…DFQHLAKVYD (178 aa)). Catalysis depends on residues Arg154, Lys178, His244, Arg247, and His270. Tyr279 acts as the O-(3'-phospho-DNA)-tyrosine intermediate in catalysis.

This sequence belongs to the 'phage' integrase family. XerC subfamily. Forms a cyclic heterotetrameric complex composed of two molecules of XerC and two molecules of XerD.

Its subcellular location is the cytoplasm. Its function is as follows. Site-specific tyrosine recombinase, which acts by catalyzing the cutting and rejoining of the recombining DNA molecules. The XerC-XerD complex is essential to convert dimers of the bacterial chromosome into monomers to permit their segregation at cell division. It also contributes to the segregational stability of plasmids. This Xanthomonas axonopodis pv. citri (strain 306) protein is Tyrosine recombinase XerC.